The chain runs to 258 residues: Small ribosomal subunit protein mS40 (258 aa).

Residues 1-35 constitute a mitochondrion transit peptide; it reads MAASILNVLLRRLPGVSPFRGAYGVQVLLQTLCTK. S49 carries the phosphoserine modification. The interval 223–258 is disordered; it reads RLREESGPPPELMPEVPLTAPAEASSTEPGAPQSAL.

This sequence belongs to the bacterial ribosomal protein bS18 family. Mitochondrion-specific ribosomal protein mS40 subfamily. Component of the mitochondrial ribosome small subunit (28S) which comprises a 12S rRNA and about 30 distinct proteins.

The protein resides in the mitochondrion. This Sus scrofa (Pig) protein is Small ribosomal subunit protein mS40 (MRPS18B).